Consider the following 178-residue polypeptide: Interleukin-10 (178 aa).

The signal sequence occupies residues 1–18 (MHSSALLCCLVLLTGVRA). Intrachain disulfides connect C30-C126 and C80-C132. The N-linked (GlcNAc...) asparagine glycan is linked to N134.

This sequence belongs to the IL-10 family. As to quaternary structure, homodimer. Interacts with IL10RA and IL10RB.

The protein resides in the secreted. Functionally, major immune regulatory cytokine that acts on many cells of the immune system where it has profound anti-inflammatory functions, limiting excessive tissue disruption caused by inflammation. Mechanistically, IL10 binds to its heterotetrameric receptor comprising IL10RA and IL10RB leading to JAK1 and STAT2-mediated phosphorylation of STAT3. In turn, STAT3 translocates to the nucleus where it drives expression of anti-inflammatory mediators. Targets antigen-presenting cells (APCs) such as macrophages and monocytes and inhibits their release of pro-inflammatory cytokines including granulocyte-macrophage colony-stimulating factor /GM-CSF, granulocyte colony-stimulating factor/G-CSF, IL-1 alpha, IL-1 beta, IL-6, IL-8 and TNF-alpha. Also interferes with antigen presentation by reducing the expression of MHC-class II and co-stimulatory molecules, thereby inhibiting their ability to induce T cell activation. In addition, controls the inflammatory response of macrophages by reprogramming essential metabolic pathways including mTOR signaling. In Cercocebus atys (Sooty mangabey), this protein is Interleukin-10 (IL10).